We begin with the raw amino-acid sequence, 274 residues long: MEALRQRIEAAFEARADITPSTVDASVRDDVQNVINMLDKGEVRVAEKIDGQWHVHQWLKKAVLLSFRIFDNVVIDGAETKYFDKVPLKFAEYDEARFKAEAIRVVPSATVRKGSFIGKNTVLMPSYVNLGAYVDEGTMVDTWATVGSCAQIGKNVHLSGGVGIGGVLEPLQAGPTIIEDNCFIGARSEIVEGVVVEEGSVISMGVYIGQSTRIYDRETGEVHYGRVPAGSVVVSGNLPSACGKYSLYAAIIVKKVDAKTRGKVGINELLRIVD.

Substrate is bound by residues Arg-104 and Asp-141.

This sequence belongs to the transferase hexapeptide repeat family. Homotrimer.

It is found in the cytoplasm. The catalysed reaction is (S)-2,3,4,5-tetrahydrodipicolinate + succinyl-CoA + H2O = (S)-2-succinylamino-6-oxoheptanedioate + CoA. It participates in amino-acid biosynthesis; L-lysine biosynthesis via DAP pathway; LL-2,6-diaminopimelate from (S)-tetrahydrodipicolinate (succinylase route): step 1/3. This chain is 2,3,4,5-tetrahydropyridine-2,6-dicarboxylate N-succinyltransferase, found in Shewanella baltica (strain OS155 / ATCC BAA-1091).